Here is a 208-residue protein sequence, read N- to C-terminus: ATP-dependent Clp protease proteolytic subunit 1 (208 aa).

Catalysis depends on S108, which acts as the Nucleophile. H133 is a catalytic residue.

This sequence belongs to the peptidase S14 family. In terms of assembly, fourteen ClpP subunits assemble into 2 heptameric rings which stack back to back to give a disk-like structure with a central cavity, resembling the structure of eukaryotic proteasomes.

Its subcellular location is the cytoplasm. The enzyme catalyses Hydrolysis of proteins to small peptides in the presence of ATP and magnesium. alpha-casein is the usual test substrate. In the absence of ATP, only oligopeptides shorter than five residues are hydrolyzed (such as succinyl-Leu-Tyr-|-NHMec, and Leu-Tyr-Leu-|-Tyr-Trp, in which cleavage of the -Tyr-|-Leu- and -Tyr-|-Trp bonds also occurs).. In terms of biological role, cleaves peptides in various proteins in a process that requires ATP hydrolysis. Has a chymotrypsin-like activity. Plays a major role in the degradation of misfolded proteins. The polypeptide is ATP-dependent Clp protease proteolytic subunit 1 (Corynebacterium glutamicum (strain ATCC 13032 / DSM 20300 / JCM 1318 / BCRC 11384 / CCUG 27702 / LMG 3730 / NBRC 12168 / NCIMB 10025 / NRRL B-2784 / 534)).